The primary structure comprises 325 residues: E3 ubiquitin-protein ligase SIAH2 (325 aa).

Polar residues predominate over residues 1–15; that stretch reads MSRPSSTGPSANKPC. Residues 1 to 43 form a disordered region; that stretch reads MSRPSSTGPSANKPCSKQPPPPQTPHAPSPAAPPAAATISAAG. At serine 6 the chain carries Phosphoserine. The residue at position 16 (serine 16) is a Phosphoserine; by DYRK2. Over residues 17-33 the composition is skewed to pro residues; it reads KQPPPPQTPHAPSPAAP. Threonine 24 carries the post-translational modification Phosphothreonine; by MAPK14. At serine 29 the chain carries Phosphoserine; by DYRK2 and MAPK14. Over residues 34–43 the composition is skewed to low complexity; that stretch reads PAAATISAAG. Serine 69 carries the post-translational modification Phosphoserine; by DYRK2. An RING-type zinc finger spans residues 81–116; that stretch reads CPVCFDYVLPPILQCQAGHLVCNQCRQKLSCCPTCR. Threonine 120 carries the post-translational modification Phosphothreonine; by DYRK2. Positions 131–323 are SBD; sequence VASAVLFPCK…LGINVTISTC (193 aa). Residues 134–194 form an SIAH-type zinc finger; it reads AVLFPCKYAT…VMSHLMHAHK (61 aa). Zn(2+) contacts are provided by cysteine 139, cysteine 146, histidine 158, cysteine 162, cysteine 169, cysteine 176, histidine 188, and histidine 193.

This sequence belongs to the SINA (Seven in absentia) family. Homodimer. Interacts with VAV1, without mediating its ubiquitin-mediated degradation. Probable component of some large E3 complex possibly composed of UBE2D1, SIAH2, CACYBP/SIP, SKP1, APC and TBL1X. Interacts with UBE2I. Interacts with UBE2E2. Interacts with PEG10, which may inhibit its activity. Interacts with PEG3 and EGLN2. Interacts with DYRK2. Interacts with SNCAIP. Interacts with NR1D1 and NR1D2. Interacts with DCC. Interacts with AXIN1. Post-translationally, phosphorylated at Thr-24 and Ser-29 by MAPK14, which mediates the degradation by the proteasome of EGLN3. Phosphorylated at Ser-29 by DYRK2; this increases the ubiquitin ligase activity and promotes degradation of EGLN3. Detected in brain (at protein level).

It localises to the cytoplasm. It is found in the nucleus. The enzyme catalyses S-ubiquitinyl-[E2 ubiquitin-conjugating enzyme]-L-cysteine + [acceptor protein]-L-lysine = [E2 ubiquitin-conjugating enzyme]-L-cysteine + N(6)-ubiquitinyl-[acceptor protein]-L-lysine.. The protein operates within protein modification; protein ubiquitination. Its function is as follows. E3 ubiquitin-protein ligase that mediates ubiquitination and subsequent proteasomal degradation of target proteins. E3 ubiquitin ligases accept ubiquitin from an E2 ubiquitin-conjugating enzyme in the form of a thioester and then directly transfers the ubiquitin to targeted substrates. Mediates E3 ubiquitin ligase activity either through direct binding to substrates or by functioning as the essential RING domain subunit of larger E3 complexes. Mediates ubiquitination and proteasomal degradation of DYRK2 in response to hypoxia. Promotes monoubiquitination of SNCA. Triggers the ubiquitin-mediated degradation of many substrates, including proteins involved in transcription regulation (GPS2, POU2AF1, PML, NCOR1), a cell surface receptor (DCC), an antiapoptotic protein (BAG1), and a protein involved in synaptic vesicle function in neurons (SYP). It is thereby involved in apoptosis, tumor suppression, cell cycle, transcription and signaling processes. Has some overlapping function with SIAH1. Triggers the ubiquitin-mediated degradation of TRAF2, whereas SIAH1 does not. Regulates cellular clock function via ubiquitination of circadian transcriptional repressors NR1D1 and NR1D2 leading to their proteasomal degradation. Plays an important role in mediating the rhythmic degradation/clearance of NR1D1 and NR1D2 contributing to their circadian profile of protein abundance. Mediates ubiquitination and degradation of EGLN2 and EGLN3 in response to the unfolded protein response (UPR), leading to their degradation and subsequent stabilization of ATF4. Also part of the Wnt signaling pathway in which it mediates the Wnt-induced ubiquitin-mediated proteasomal degradation of AXIN1. The polypeptide is E3 ubiquitin-protein ligase SIAH2 (Siah2) (Rattus norvegicus (Rat)).